Here is a 449-residue protein sequence, read N- to C-terminus: GTPase Der (449 aa).

EngA-type G domains follow at residues 3–167 (AVIA…PTSE) and 178–351 (PRIA…IDSR). GTP is bound by residues 9-16 (GRPNVGKS), 56-60 (DTGGF), 119-122 (NKMD), 184-191 (GRPNVGKS), 231-235 (DTAGM), and 296-299 (NKWD). The region spanning 352-436 (RHFSTAELNR…PLRLVFRQGE (85 aa)) is the KH-like domain.

Belongs to the TRAFAC class TrmE-Era-EngA-EngB-Septin-like GTPase superfamily. EngA (Der) GTPase family. As to quaternary structure, associates with the 50S ribosomal subunit.

In terms of biological role, GTPase that plays an essential role in the late steps of ribosome biogenesis. The protein is GTPase Der of Acidithiobacillus ferrooxidans (strain ATCC 23270 / DSM 14882 / CIP 104768 / NCIMB 8455) (Ferrobacillus ferrooxidans (strain ATCC 23270)).